Consider the following 57-residue polypeptide: uncharacterized protein (57 aa).

This is an uncharacterized protein from Haemophilus influenzae (strain ATCC 51907 / DSM 11121 / KW20 / Rd).